The following is a 208-amino-acid chain: Protein-L-isoaspartate O-methyltransferase (208 aa).

S59 is an active-site residue.

This sequence belongs to the methyltransferase superfamily. L-isoaspartyl/D-aspartyl protein methyltransferase family.

The protein localises to the cytoplasm. It carries out the reaction [protein]-L-isoaspartate + S-adenosyl-L-methionine = [protein]-L-isoaspartate alpha-methyl ester + S-adenosyl-L-homocysteine. Functionally, catalyzes the methyl esterification of L-isoaspartyl residues in peptides and proteins that result from spontaneous decomposition of normal L-aspartyl and L-asparaginyl residues. It plays a role in the repair and/or degradation of damaged proteins. The polypeptide is Protein-L-isoaspartate O-methyltransferase (Pectobacterium carotovorum subsp. carotovorum (strain PC1)).